The sequence spans 132 residues: Large ribosomal subunit protein bL17 (132 aa).

The protein belongs to the bacterial ribosomal protein bL17 family. Part of the 50S ribosomal subunit. Contacts protein L32.

This chain is Large ribosomal subunit protein bL17, found in Ralstonia pickettii (strain 12J).